The primary structure comprises 188 residues: Pro-adrenomedullin (188 aa).

The N-terminal stretch at 1 to 21 (MKLVPVALLYLGSLAFLGADT) is a signal peptide. Residue Arg-41 is modified to Arginine amide. A propeptide spanning residues 45–92 (ELRVSSSYPTGLAEVKAGPAQTLIRTQDVKGASRNPQTSGPDAARIRV) is cleaved from the precursor. A disulfide bridge connects residues Cys-110 and Cys-115. Residues 131–176 (DKDGVAPRSKISPQGYGRRRRRSLPEPGLRRTLLFPEPRPGGAPAP) are disordered. At Tyr-146 the chain carries Tyrosine amide. Positions 153-188 (SLPEPGLRRTLLFPEPRPGGAPAPRAHQVLANLLKM) are cleaved as a propeptide — preproAM C-terminal fragment.

This sequence belongs to the adrenomedullin family.

The protein localises to the secreted. In terms of biological role, adrenomedullin/ADM and proadrenomedullin N-20 terminal peptide/PAMP are peptide hormones that act as potent hypotensive and vasodilatator agents. Numerous actions have been reported most related to the physiologic control of fluid and electrolyte homeostasis. Functionally, ADM function is mediated by the CALCRL-RAMP2 and CALCRL-RAMP3 receptor complexes with ADM showing the highest potency for the CALCRL-RAMP2 complex. The polypeptide is Pro-adrenomedullin (ADM) (Canis lupus familiaris (Dog)).